Consider the following 1441-residue polypeptide: Remodeling and spacing factor 1 (1441 aa).

A DDT domain is found at 17 to 84 (PGSCPNFAVV…MRKIGKSVTA (68 aa)). Glycyl lysine isopeptide (Lys-Gly) (interchain with G-Cter in SUMO2) cross-links involve residues Lys136 and Lys215. Over residues 215-227 (KNSSQQDNSSRES) the composition is skewed to polar residues. Positions 215-283 (KNSSQQDNSS…TTVKKEKEDE (69 aa)) are disordered. Residue Ser227 is modified to Phosphoserine. Basic and acidic residues-rich tracts occupy residues 234 to 257 (ETKKEEETPKQEEQKESEKMKSEE) and 274 to 283 (TTVKKEKEDE). Glycyl lysine isopeptide (Lys-Gly) (interchain with G-Cter in SUMO2) cross-links involve residues Lys236, Lys243, Lys248, Lys252, and Lys254. Lys277 participates in a covalent cross-link: Glycyl lysine isopeptide (Lys-Gly) (interchain with G-Cter in SUMO1); alternate. Lys277 participates in a covalent cross-link: Glycyl lysine isopeptide (Lys-Gly) (interchain with G-Cter in SUMO2); alternate. Residues Lys284, Lys288, Lys294, Lys305, Lys306, Lys309, Lys323, Lys327, Lys337, Lys342, Lys358, Lys373, Lys381, and Lys390 each participate in a glycyl lysine isopeptide (Lys-Gly) (interchain with G-Cter in SUMO2) cross-link. Positions 330 to 340 (RADPKDTKSSM) are enriched in basic and acidic residues. Residues 330–385 (RADPKDTKSSMEKPVAQEPERIEFGGNIKSSHEITEKSTEETEKLKNDQQAKIPLK) are disordered. The span at 359-378 (SSHEITEKSTEETEKLKNDQ) shows a compositional bias: basic and acidic residues. Phosphoserine occurs at positions 392 and 397. Residues Lys400, Lys405, Lys415, and Lys419 each participate in a glycyl lysine isopeptide (Lys-Gly) (interchain with G-Cter in SUMO2) cross-link. Residue Ser429 is modified to Phosphoserine. Lys439 participates in a covalent cross-link: Glycyl lysine isopeptide (Lys-Gly) (interchain with G-Cter in SUMO2). A Glycyl lysine isopeptide (Lys-Gly) (interchain with G-Cter in SUMO1); alternate cross-link involves residue Lys456. Residue Lys456 forms a Glycyl lysine isopeptide (Lys-Gly) (interchain with G-Cter in SUMO2); alternate linkage. Residues Lys463 and Lys468 each participate in a glycyl lysine isopeptide (Lys-Gly) (interchain with G-Cter in SUMO2) cross-link. Positions 467–480 (TKEESYSPSKDRNI) are enriched in basic and acidic residues. The interval 467 to 634 (TKEESYSPSK…AAETSPPSNI (168 aa)) is disordered. A Phosphoserine modification is found at Ser473. Polar residues predominate over residues 482-498 (TEGNGTESLNSVITSMK). Lys498 is covalently cross-linked (Glycyl lysine isopeptide (Lys-Gly) (interchain with G-Cter in SUMO2)). The segment covering 500-514 (GELEKETAPLRKDAD) has biased composition (basic and acidic residues). Ser524 is modified (phosphoserine). A compositionally biased stretch (polar residues) spans 552–562 (SKTALSSTESC). Lys565 participates in a covalent cross-link: Glycyl lysine isopeptide (Lys-Gly) (interchain with G-Cter in SUMO2). Residues 565 to 601 (KGEEKSPKTKKDKRPPILECLEKLEKSKKTFLDKDAQ) show a composition bias toward basic and acidic residues. Ser570 and Ser604 each carry phosphoserine. A compositionally biased stretch (basic and acidic residues) spans 609–621 (EVPKSTLESEKPG). Ser622 carries the post-translational modification Phosphoserine. Thr628 carries the phosphothreonine modification. Ser629 bears the Phosphoserine mark. Residues Lys662, Lys663, Lys670, Lys677, Lys698, and Lys709 each participate in a glycyl lysine isopeptide (Lys-Gly) (interchain with G-Cter in SUMO2) cross-link. Residues 675–887 (FTKVEMDNLD…EEKESEEAIL (213 aa)) are disordered. Ser748 is modified (phosphoserine). 3 stretches are compositionally biased toward basic and acidic residues: residues 753–770 (LEPENKQEKTEKEEEKTN), 789–802 (AEIRDQKADKKRGE), and 816–831 (KTDKKEILKKSEKDTN). Glycyl lysine isopeptide (Lys-Gly) (interchain with G-Cter in SUMO2) cross-links involve residues Lys758, Lys768, Lys795, and Lys799. Over residues 864–873 (GSGSEKSSAA) the composition is skewed to low complexity. Residues 874-887 (SEEEEEKESEEAIL) show a composition bias toward acidic residues. Ser882 is modified (phosphoserine). Residues 891 to 941 (DEPCKKCGLPNHPELILLCDSCDSGYHTACLRPPLMIIPDGEWFCPPCQHK) form a PHD-type zinc finger. A coiled-coil region spans residues 942-1012 (LLCEKLEEQL…SKANLLERRS (71 aa)). A disordered region spans residues 983-1007 (PPQEPDFSEDQEEKKKDSKKSKANL). Lys1039 participates in a covalent cross-link: Glycyl lysine isopeptide (Lys-Gly) (interchain with G-Cter in SUMO2). Residue Lys1050 is modified to N6-acetyllysine. The interval 1063–1428 (ISTILDEERK…EEEEDELLRV (366 aa)) is disordered. Composition is skewed to acidic residues over residues 1094–1107 (LDSDSNLDEEESED) and 1120–1141 (VVSDENPDESEEDPPSNDDSDT). Ser1096, Ser1098, and Ser1105 each carry phosphoserine. Residues 1146 to 1169 (RRLRRHPSRPMRQSRRLRRKTPKK) show a composition bias toward basic residues. Positions 1189 to 1199 (SDFSDDFSDDF) are enriched in acidic residues. Positions 1203–1212 (RRRRSRRNQK) are enriched in basic residues. 3 positions are modified to phosphoserine: Ser1221, Ser1223, and Ser1226. The segment covering 1229-1244 (SLRRGKEIRRVHKRRL) has biased composition (basic residues). Residues Ser1258 and Ser1277 each carry the phosphoserine modification. Thr1278 bears the Phosphothreonine mark. Over residues 1280–1292 (EYSEADEEEEEEE) the composition is skewed to acidic residues. Thr1305 is modified (phosphothreonine). 2 positions are modified to phosphoserine: Ser1325 and Ser1336. Basic and acidic residues predominate over residues 1335 to 1344 (ESTKKPYRIE). Lys1339 is modified (N6-acetyllysine). Ser1345, Ser1359, and Ser1375 each carry phosphoserine. Residues 1394–1408 (PKDNSTASASLASNG) are compositionally biased toward polar residues.

As to quaternary structure, component of the RSF-1 ISWI chromatin-remodeling complex at least composed of SMARCA1 and RSF1. Within the RSF-1 ISWI chromatin-remodeling complex interacts with SMARCA1. Component of the RSF-5 ISWI chromatin-remodeling complex (also called the RSF complex) at least composed of SMARCA5/SNF2H and RSF1. Within the RSF-5 ISWI chromatin-remodeling complex interacts with SMARCA5/SNF2H; the interaction is direct. Identified in a centromere complex containing histones H2A, H2B and H4, and at least CENPA, CENPB, CENPC, CENPT, CENPN, HJURP, SUPT16H, SSRP1 and RSF1. Also binds the HBV pX/HBx protein, which is required to activate transcription of the viral genome. Phosphorylated. Ubiquitously expressed. Highly expressed in the heart, skeletal muscle, kidney and placenta. Expressed at low levels in the brain and colon.

It localises to the nucleus. Its function is as follows. Regulatory subunit of the ATP-dependent RSF-1 and RSF-5 ISWI chromatin-remodeling complexes, which form ordered nucleosome arrays on chromatin and facilitate access to DNA during DNA-templated processes such as DNA replication, transcription, and repair. Binds to core histones together with SMARCA5, and is required for the assembly of regular nucleosome arrays by the RSF-5 ISWI chromatin-remodeling complex. Directly stimulates the ATPase activity of SMARCA1 and SMARCA5 in the RSF-1 and RSF-5 ISWI chromatin-remodeling complexes, respectively. The RSF-1 ISWI chromatin remodeling complex has a lower ATP hydrolysis rate than the RSF-5 ISWI chromatin-remodeling complex. The complexes do not have the ability to slide mononucleosomes to the center of a DNA template. Facilitates transcription of hepatitis B virus (HBV) genes by the pX transcription activator. In case of infection by HBV, together with pX, it represses TNF-alpha induced NF-kappa-B transcription activation. Represses transcription when artificially recruited to chromatin by fusion to a heterogeneous DNA binding domain. The sequence is that of Remodeling and spacing factor 1 (RSF1) from Homo sapiens (Human).